The primary structure comprises 55 residues: Conotoxin Cal6.40 (55 aa).

A signal peptide spans 1–21; it reads MSGSGVLLLTLLLLVPLSALA. 3 disulfide bridges follow: Cys24–Cys36, Cys29–Cys41, and Cys35–Cys50.

In terms of tissue distribution, expressed by the venom duct.

The protein localises to the secreted. Its function is as follows. Probable neurotoxin. The protein is Conotoxin Cal6.40 of Californiconus californicus (California cone).